The following is a 359-amino-acid chain: Protein-arginine kinase (359 aa).

A Phosphagen kinase C-terminal domain is found at isoleucine 25–leucine 257. ATP-binding positions include serine 28–arginine 32, histidine 93, arginine 128, arginine 179–methionine 183, and arginine 210–glutamate 215. An RDXXRA motif of the pArg binding pocket involved in allosteric regulation motif is present at residues arginine 340–alanine 345.

The protein belongs to the ATP:guanido phosphotransferase family.

The enzyme catalyses L-arginyl-[protein] + ATP = N(omega)-phospho-L-arginyl-[protein] + ADP + H(+). With respect to regulation, appears to be allosterically activated by the binding of pArg-containing polypeptides to the pArg-binding pocket localized in the C-terminal domain of McsB. Functionally, catalyzes the specific phosphorylation of arginine residues in proteins. In Syntrophomonas wolfei subsp. wolfei (strain DSM 2245B / Goettingen), this protein is Protein-arginine kinase.